The following is a 396-amino-acid chain: Tryptophan synthase beta chain (396 aa).

N6-(pyridoxal phosphate)lysine is present on K86.

This sequence belongs to the TrpB family. As to quaternary structure, tetramer of two alpha and two beta chains. The cofactor is pyridoxal 5'-phosphate.

The catalysed reaction is (1S,2R)-1-C-(indol-3-yl)glycerol 3-phosphate + L-serine = D-glyceraldehyde 3-phosphate + L-tryptophan + H2O. Its pathway is amino-acid biosynthesis; L-tryptophan biosynthesis; L-tryptophan from chorismate: step 5/5. Its function is as follows. The beta subunit is responsible for the synthesis of L-tryptophan from indole and L-serine. This Erwinia tasmaniensis (strain DSM 17950 / CFBP 7177 / CIP 109463 / NCPPB 4357 / Et1/99) protein is Tryptophan synthase beta chain.